Here is a 223-residue protein sequence, read N- to C-terminus: Ribose-5-phosphate isomerase A (223 aa).

Substrate contacts are provided by residues T29–T32, D82–D85, and K95–G98. E104 serves as the catalytic Proton acceptor. K122 is a binding site for substrate.

This sequence belongs to the ribose 5-phosphate isomerase family. In terms of assembly, homodimer.

The enzyme catalyses aldehydo-D-ribose 5-phosphate = D-ribulose 5-phosphate. The protein operates within carbohydrate degradation; pentose phosphate pathway; D-ribose 5-phosphate from D-ribulose 5-phosphate (non-oxidative stage): step 1/1. Catalyzes the reversible conversion of ribose-5-phosphate to ribulose 5-phosphate. The sequence is that of Ribose-5-phosphate isomerase A from Neisseria meningitidis serogroup B (strain ATCC BAA-335 / MC58).